The sequence spans 1132 residues: Phosphatidylinositide phosphatase SAC2 (1132 aa).

One can recognise an SAC domain in the interval 167–518 (LKMFMDSESF…GDSISRQYAG (352 aa)). Positions 250–269 (ESSDDDKSSPETPPQDSTCV) are disordered. The hSac2 domain occupies 593-760 (RSHQELISQL…KSSKPHEDII (168 aa)). Serine 714, serine 827, and serine 830 each carry phosphoserine. The interval 833–872 (TMENPGVMGNKVQGESDGDISSDNDSYHSDEFLTNSKSEE) is disordered. Over residues 857-872 (DSYHSDEFLTNSKSEE) the composition is skewed to basic and acidic residues. Phosphoserine occurs at positions 879, 882, 908, and 911. 2 stretches are compositionally biased toward polar residues: residues 908–918 (SASSIDVSTHA) and 994–1005 (RVSNEETQSEPM). 2 disordered regions span residues 908–951 (SASS…HTRT) and 981–1016 (VAQK…SQLN). Position 1103 is a phosphoserine (serine 1103).

Homodimer. Interacts with OCRL and RAB5. Interacts with INPP5B and INPP4A. Interacts with STAT3; the interaction is independent of STAT3 'Tyr-705' phosphorylation status. As to expression, highly expressed in brain and hypothalamus, expressed in lung and pancreas, and detected at low levels in liver and heart (at protein level).

The protein resides in the membrane. It is found in the clathrin-coated pit. The protein localises to the early endosome. Its subcellular location is the recycling endosome. The catalysed reaction is a myo-inositol phosphate + H2O = myo-inositol + phosphate. Functionally, inositol 4-phosphatase which mainly acts on phosphatidylinositol 4-phosphate. May be functionally linked to OCRL, which converts phosphatidylinositol 4,5-bisphosphate to phosphatidylinositol, for a sequential dephosphorylation of phosphatidylinositol 4,5-bisphosphate at the 5 and 4 position of inositol, thus playing an important role in the endocytic recycling. Regulator of TF:TFRC and integrins recycling pathway, is also involved in cell migration mechanisms. Modulates AKT/GSK3B pathway by decreasing AKT and GSK3B phosphorylation. Negatively regulates STAT3 signaling pathway through inhibition of STAT3 phosphorylation and translocation to the nucleus. Functionally important modulator of cardiac myocyte size and of the cardiac response to stress. May play a role as negative regulator of axon regeneration after central nervous system injuries. This chain is Phosphatidylinositide phosphatase SAC2, found in Mus musculus (Mouse).